Here is a 277-residue protein sequence, read N- to C-terminus: Outer plastidial membrane protein porin (277 aa).

The protein belongs to the eukaryotic mitochondrial porin (TC 1.B.8.1) family.

The protein localises to the plastid outer membrane. Functionally, forms a channel through the cell membrane that allows diffusion of small hydrophilic molecules. The channel adopts an open conformation at low or zero membrane potential and a closed conformation at potentials above 30-40 mV. The open state has a weak anion selectivity whereas the closed state is cation-selective. In Zea mays (Maize), this protein is Outer plastidial membrane protein porin (POR1).